We begin with the raw amino-acid sequence, 244 residues long: DNA repair protein RecO (244 aa).

The protein belongs to the RecO family.

Involved in DNA repair and RecF pathway recombination. In Koribacter versatilis (strain Ellin345), this protein is DNA repair protein RecO.